The chain runs to 694 residues: Elongation factor G (694 aa).

The 280-residue stretch at 9 to 288 folds into the tr-type G domain; that stretch reads DAIRNIGIMA…VIVKWLPSPL (280 aa). Residues 18–25, 82–86, and 136–139 each bind GTP; these read AHIDAGKT, DTPGH, and NKMD.

This sequence belongs to the TRAFAC class translation factor GTPase superfamily. Classic translation factor GTPase family. EF-G/EF-2 subfamily.

It is found in the cytoplasm. Its function is as follows. Catalyzes the GTP-dependent ribosomal translocation step during translation elongation. During this step, the ribosome changes from the pre-translocational (PRE) to the post-translocational (POST) state as the newly formed A-site-bound peptidyl-tRNA and P-site-bound deacylated tRNA move to the P and E sites, respectively. Catalyzes the coordinated movement of the two tRNA molecules, the mRNA and conformational changes in the ribosome. This chain is Elongation factor G, found in Chlamydia trachomatis serovar L2 (strain ATCC VR-902B / DSM 19102 / 434/Bu).